Consider the following 335-residue polypeptide: Ornithine carbamoyltransferase (335 aa).

Carbamoyl phosphate contacts are provided by residues 56–59 (STRT), Gln-83, Arg-107, and 134–137 (HPTQ). Residues Asn-168, Asp-232, and 236–237 (SM) each bind L-ornithine. Carbamoyl phosphate contacts are provided by residues 274–275 (CL) and Arg-320.

Belongs to the aspartate/ornithine carbamoyltransferase superfamily. OTCase family.

Its subcellular location is the cytoplasm. It carries out the reaction carbamoyl phosphate + L-ornithine = L-citrulline + phosphate + H(+). It participates in amino-acid biosynthesis; L-arginine biosynthesis; L-arginine from L-ornithine and carbamoyl phosphate: step 1/3. Its function is as follows. Reversibly catalyzes the transfer of the carbamoyl group from carbamoyl phosphate (CP) to the N(epsilon) atom of ornithine (ORN) to produce L-citrulline. In Yersinia pseudotuberculosis serotype I (strain IP32953), this protein is Ornithine carbamoyltransferase.